Here is a 448-residue protein sequence, read N- to C-terminus: Signal recognition particle 54 kDa protein (448 aa).

Residues G107–T114, D189–R193, and T247–D250 contribute to the GTP site.

It belongs to the GTP-binding SRP family. SRP54 subfamily. As to quaternary structure, part of the signal recognition particle protein translocation system, which is composed of SRP and FtsY. Archaeal SRP consists of a 7S RNA molecule of 300 nucleotides and two protein subunits: SRP54 and SRP19.

The protein localises to the cytoplasm. The catalysed reaction is GTP + H2O = GDP + phosphate + H(+). In terms of biological role, involved in targeting and insertion of nascent membrane proteins into the cytoplasmic membrane. Binds to the hydrophobic signal sequence of the ribosome-nascent chain (RNC) as it emerges from the ribosomes. The SRP-RNC complex is then targeted to the cytoplasmic membrane where it interacts with the SRP receptor FtsY. The sequence is that of Signal recognition particle 54 kDa protein from Thermococcus gammatolerans (strain DSM 15229 / JCM 11827 / EJ3).